A 130-amino-acid polypeptide reads, in one-letter code: Small ribosomal subunit protein uS11 (130 aa).

Belongs to the universal ribosomal protein uS11 family. In terms of assembly, part of the 30S ribosomal subunit. Interacts with proteins S7 and S18. Binds to IF-3.

Its function is as follows. Located on the platform of the 30S subunit, it bridges several disparate RNA helices of the 16S rRNA. Forms part of the Shine-Dalgarno cleft in the 70S ribosome. This Helicobacter hepaticus (strain ATCC 51449 / 3B1) protein is Small ribosomal subunit protein uS11.